We begin with the raw amino-acid sequence, 399 residues long: Serine palmitoyltransferase (399 aa).

Pyridoxal 5'-phosphate contacts are provided by residues glycine 113–phenylalanine 114, histidine 213, threonine 241, and serine 243. Lysine 244 bears the N6-(pyridoxal phosphate)lysine mark.

This sequence belongs to the class-II pyridoxal-phosphate-dependent aminotransferase family. As to quaternary structure, homodimer. Pyridoxal 5'-phosphate is required as a cofactor.

It is found in the cytoplasm. Its subcellular location is the cell inner membrane. The catalysed reaction is L-serine + hexadecanoyl-CoA + H(+) = 3-oxosphinganine + CO2 + CoA. Its pathway is lipid metabolism; sphingolipid metabolism. Its function is as follows. Catalyzes the condensation of L-serine with palmitoyl-CoA (hexadecanoyl-CoA) to produce 3-oxosphinganine. Exhibits a broad substrate specificity concerning the chain length and the degree of unsaturation of acyl-CoA. This chain is Serine palmitoyltransferase, found in Sphingobacterium multivorum.